A 186-amino-acid chain; its full sequence is Mitoferrin-2A (186 aa).

One copy of the Solcar repeat lies at 75 to 163 (SNVTTHMLAG…FACYEKLKKT (89 aa)). The next 3 membrane-spanning stretches (helical) occupy residues 77–96 (VTTH…CLMY), 137–157 (RGLN…FACY), and 172–185 (GNSH…YSCP).

Belongs to the mitochondrial carrier (TC 2.A.29) family.

Its subcellular location is the mitochondrion inner membrane. It catalyses the reaction Fe(2+)(in) = Fe(2+)(out). Mitochondrial iron transporter that mediates iron uptake. Probably required for heme synthesis of hemoproteins and Fe-S cluster assembly in non-erythroid cells. The polypeptide is Mitoferrin-2A (slc25a28-a) (Xenopus laevis (African clawed frog)).